We begin with the raw amino-acid sequence, 221 residues long: Probable septum site-determining protein MinC (221 aa).

The protein belongs to the MinC family. Interacts with MinD and FtsZ.

Functionally, cell division inhibitor that blocks the formation of polar Z ring septums. Rapidly oscillates between the poles of the cell to destabilize FtsZ filaments that have formed before they mature into polar Z rings. Prevents FtsZ polymerization. In Shewanella baltica (strain OS223), this protein is Probable septum site-determining protein MinC.